An 83-amino-acid chain; its full sequence is Small ribosomal subunit protein uS17 (83 aa).

It belongs to the universal ribosomal protein uS17 family. In terms of assembly, part of the 30S ribosomal subunit.

One of the primary rRNA binding proteins, it binds specifically to the 5'-end of 16S ribosomal RNA. In Ehrlichia chaffeensis (strain ATCC CRL-10679 / Arkansas), this protein is Small ribosomal subunit protein uS17.